The chain runs to 419 residues: UDP-N-acetylglucosamine 1-carboxyvinyltransferase 2 (419 aa).

22 to 23 (KN) lines the phosphoenolpyruvate pocket. R92 contacts UDP-N-acetyl-alpha-D-glucosamine. Residue C116 is the Proton donor of the active site. 2-(S-cysteinyl)pyruvic acid O-phosphothioketal is present on C116. Residues 121-125 (RPIDL), D306, and I328 contribute to the UDP-N-acetyl-alpha-D-glucosamine site.

This sequence belongs to the EPSP synthase family. MurA subfamily.

Its subcellular location is the cytoplasm. The enzyme catalyses phosphoenolpyruvate + UDP-N-acetyl-alpha-D-glucosamine = UDP-N-acetyl-3-O-(1-carboxyvinyl)-alpha-D-glucosamine + phosphate. It participates in cell wall biogenesis; peptidoglycan biosynthesis. Functionally, cell wall formation. Adds enolpyruvyl to UDP-N-acetylglucosamine. The chain is UDP-N-acetylglucosamine 1-carboxyvinyltransferase 2 from Streptococcus pneumoniae (strain ATCC BAA-255 / R6).